A 142-amino-acid polypeptide reads, in one-letter code: Transcription antitermination protein NusB (142 aa).

This sequence belongs to the NusB family.

Its function is as follows. Involved in transcription antitermination. Required for transcription of ribosomal RNA (rRNA) genes. Binds specifically to the boxA antiterminator sequence of the ribosomal RNA (rrn) operons. This Latilactobacillus sakei subsp. sakei (strain 23K) (Lactobacillus sakei subsp. sakei) protein is Transcription antitermination protein NusB.